The following is a 333-amino-acid chain: Cysteine protease (333 aa).

An N-terminal signal peptide occupies residues 1–18 (MKFLLVAALCALVAIGSC). Residues 19 to 108 (KPTREEIKTF…MEAAKEPLIN (90 aa)) constitute a propeptide, activation peptide. Asn-93 carries N-linked (GlcNAc...) asparagine glycosylation. Disulfide bonds link Cys-134-Cys-182 and Cys-168-Cys-214. Cys-137 is an active-site residue. Residues His-281 and Asn-301 contribute to the active site.

The protein belongs to the peptidase C1 family. Homodimer.

In terms of biological role, cysteine protease. In Blomia tropicalis (Mite), this protein is Cysteine protease.